We begin with the raw amino-acid sequence, 213 residues long: Orotate phosphoribosyltransferase (213 aa).

Residue Lys-26 coordinates 5-phospho-alpha-D-ribose 1-diphosphate. 34 to 35 (FF) contributes to the orotate binding site. 5-phospho-alpha-D-ribose 1-diphosphate contacts are provided by residues 72–73 (YK), Arg-99, Lys-100, Lys-103, His-105, and 124–132 (DDVITAGTA). Thr-128 and Arg-156 together coordinate orotate.

It belongs to the purine/pyrimidine phosphoribosyltransferase family. PyrE subfamily. In terms of assembly, homodimer. The cofactor is Mg(2+).

It carries out the reaction orotidine 5'-phosphate + diphosphate = orotate + 5-phospho-alpha-D-ribose 1-diphosphate. The protein operates within pyrimidine metabolism; UMP biosynthesis via de novo pathway; UMP from orotate: step 1/2. Functionally, catalyzes the transfer of a ribosyl phosphate group from 5-phosphoribose 1-diphosphate to orotate, leading to the formation of orotidine monophosphate (OMP). This chain is Orotate phosphoribosyltransferase, found in Shigella dysenteriae serotype 1 (strain Sd197).